The chain runs to 565 residues: NAD-dependent malic enzyme (565 aa).

Tyr104 acts as the Proton donor in catalysis. Arg157 contributes to the NAD(+) binding site. Lys175 acts as the Proton acceptor in catalysis. Glu246, Asp247, and Asp270 together coordinate a divalent metal cation. Residues Asp270 and Asn418 each coordinate NAD(+).

It belongs to the malic enzymes family. In terms of assembly, homotetramer. Requires Mg(2+) as cofactor. Mn(2+) is required as a cofactor.

The catalysed reaction is (S)-malate + NAD(+) = pyruvate + CO2 + NADH. The enzyme catalyses oxaloacetate + H(+) = pyruvate + CO2. In Shigella boydii serotype 18 (strain CDC 3083-94 / BS512), this protein is NAD-dependent malic enzyme.